Here is a 91-residue protein sequence, read N- to C-terminus: Signal recognition particle 19 kDa protein (91 aa).

The protein belongs to the SRP19 family. Part of the signal recognition particle protein translocation system, which is composed of SRP and FtsY. Archaeal SRP consists of a 7S RNA molecule of 300 nucleotides and two protein subunits: SRP54 and SRP19.

It is found in the cytoplasm. Involved in targeting and insertion of nascent membrane proteins into the cytoplasmic membrane. Binds directly to 7S RNA and mediates binding of the 54 kDa subunit of the SRP. This Methanothermobacter thermautotrophicus (strain ATCC 29096 / DSM 1053 / JCM 10044 / NBRC 100330 / Delta H) (Methanobacterium thermoautotrophicum) protein is Signal recognition particle 19 kDa protein.